The primary structure comprises 105 residues: Blood plasma apolipoprotein LAL1 (105 aa).

Residues 1–21 form the signal peptide; it reads MKLHVAALATLAVVCILAAGS. Positions 22-29 are excised as a propeptide; the sequence is EAAPKAMS.

Plasma.

The protein resides in the secreted. The chain is Blood plasma apolipoprotein LAL1 from Petromyzon marinus (Sea lamprey).